Reading from the N-terminus, the 354-residue chain is Chorismate synthase (354 aa).

Arg48 provides a ligand contact to NADP(+). FMN is bound by residues 125–127 (RAS), Gly277, 292–296 (KPIPS), and Arg318.

It belongs to the chorismate synthase family. As to quaternary structure, homotetramer. It depends on FMNH2 as a cofactor.

The catalysed reaction is 5-O-(1-carboxyvinyl)-3-phosphoshikimate = chorismate + phosphate. The protein operates within metabolic intermediate biosynthesis; chorismate biosynthesis; chorismate from D-erythrose 4-phosphate and phosphoenolpyruvate: step 7/7. In terms of biological role, catalyzes the anti-1,4-elimination of the C-3 phosphate and the C-6 proR hydrogen from 5-enolpyruvylshikimate-3-phosphate (EPSP) to yield chorismate, which is the branch point compound that serves as the starting substrate for the three terminal pathways of aromatic amino acid biosynthesis. This reaction introduces a second double bond into the aromatic ring system. In Nitratidesulfovibrio vulgaris (strain DP4) (Desulfovibrio vulgaris), this protein is Chorismate synthase.